The primary structure comprises 1450 residues: Inactive serine/threonine-protein kinase TEX14 (1450 aa).

ANK repeat units follow at residues 27 to 54 (LHEY…AVNT), 55 to 84 (QGQS…DPNH), and 88 to 117 (DGST…DLRL). Serine 175 and serine 186 each carry phosphoserine. Positions 199–512 (IISAQNIYSF…ILKNDLKEFI (314 aa)) constitute a Protein kinase domain. Residues 205–213 (IYSFGFGKF) and lysine 267 each bind ATP. Serine 431 carries the phosphoserine; by PLK1 modification. Residues serine 561 and serine 662 each carry the phosphoserine modification. Residues 700-720 (SDSLGSLNLPEPTREAKGKTS) are disordered. The short motif at 791–797 (GPPSLAY) is the GPPX3Y element. 4 disordered regions span residues 852–906 (VSEE…MASV), 947–977 (PPWN…RGPE), 992–1012 (DEPK…DKNK), and 1035–1062 (QPEQ…SSPI). Composition is skewed to polar residues over residues 875 to 886 (KQSTGEQLPSTQ) and 894 to 906 (KNTN…MASV). The short motif at 889 to 897 (RESLEKNTN) is the D-box element. The segment covering 992–1011 (DEPKGNTKFGKMDNSDCDKN) has biased composition (basic and acidic residues). The span at 1038–1061 (QNEASQASCDTSVGTEKFYSTSSP) shows a compositional bias: polar residues. Phosphoserine is present on residues serine 1060 and serine 1221. Disordered stretches follow at residues 1261–1282 (THAT…QQHL) and 1300–1418 (KQQQ…SLGT). Polar residues-rich tracts occupy residues 1300–1311 (KQQQVSSLASHE) and 1332–1344 (TNSS…LSSR). Phosphoserine occurs at positions 1357 and 1358. Basic and acidic residues-rich tracts occupy residues 1383 to 1397 (STRE…VVEQ) and 1404 to 1413 (SIKPERRESD). A phosphoserine mark is found at serine 1412 and serine 1449.

This sequence belongs to the protein kinase superfamily. In terms of assembly, interacts with KIF23 and RBM44. Interacts with CEP55; inhibiting interaction between CEP55 and PDCD6IP/ALIX and TSG101. Post-translationally, phosphorylated on Thr residues by CDK1 during early phases of mitosis, promoting the interaction with PLK1 and recruitment to kinetochores. Phosphorylated on Ser-431 by PLK1 during late prometaphase promotes the rapid depletion from kinetochores and its subsequent degradation by the APC/C complex. In terms of tissue distribution, detected in testis and spermatogonia. Not detectable in the other tissues tested.

Its subcellular location is the cytoplasm. The protein resides in the midbody. It is found in the chromosome. The protein localises to the centromere. It localises to the kinetochore. Functionally, required both for the formation of intercellular bridges during meiosis and for kinetochore-microtubule attachment during mitosis. Intercellular bridges are evolutionarily conserved structures that connect differentiating germ cells and are required for spermatogenesis and male fertility. Acts by promoting the conversion of midbodies into intercellular bridges via its interaction with CEP55: interaction with CEP55 inhibits the interaction between CEP55 and PDCD6IP/ALIX and TSG101, blocking cell abscission and leading to transform midbodies into intercellular bridges. Also plays a role during mitosis: recruited to kinetochores by PLK1 during early mitosis and regulates the maturation of the outer kinetochores and microtubule attachment. Has no protein kinase activity in vitro. The protein is Inactive serine/threonine-protein kinase TEX14 (Tex14) of Mus musculus (Mouse).